Consider the following 164-residue polypeptide: RNA pyrophosphohydrolase (164 aa).

In terms of domain architecture, Nudix hydrolase spans 8–153 (PYRSNVGAAL…KRPIYERLAR (146 aa)). The short motif at 45–66 (GGIDGDEDPAAAVLRELDEEIG) is the Nudix box element.

This sequence belongs to the Nudix hydrolase family. RppH subfamily. Requires a divalent metal cation as cofactor.

Its function is as follows. Accelerates the degradation of transcripts by removing pyrophosphate from the 5'-end of triphosphorylated RNA, leading to a more labile monophosphorylated state that can stimulate subsequent ribonuclease cleavage. This is RNA pyrophosphohydrolase from Acidiphilium cryptum (strain JF-5).